The sequence spans 205 residues: GTP cyclohydrolase 1 (205 aa).

3 residues coordinate Zn(2+): cysteine 94, histidine 97, and cysteine 165.

The protein belongs to the GTP cyclohydrolase I family. Toroid-shaped homodecamer, composed of two pentamers of five dimers.

The enzyme catalyses GTP + H2O = 7,8-dihydroneopterin 3'-triphosphate + formate + H(+). It functions in the pathway cofactor biosynthesis; 7,8-dihydroneopterin triphosphate biosynthesis; 7,8-dihydroneopterin triphosphate from GTP: step 1/1. The polypeptide is GTP cyclohydrolase 1 (Sinorhizobium medicae (strain WSM419) (Ensifer medicae)).